We begin with the raw amino-acid sequence, 373 residues long: Spermidine/putrescine import ATP-binding protein PotA (373 aa).

Residues 11 to 241 (IELRSLKKSY…PSNLFVAKFI (231 aa)) enclose the ABC transporter domain. 43–50 (GPSGCGKT) is a binding site for ATP.

This sequence belongs to the ABC transporter superfamily. Spermidine/putrescine importer (TC 3.A.1.11.1) family. The complex is composed of two ATP-binding proteins (PotA), two transmembrane proteins (PotB and PotC) and a solute-binding protein (PotD).

It localises to the cell inner membrane. The catalysed reaction is ATP + H2O + polyamine-[polyamine-binding protein]Side 1 = ADP + phosphate + polyamineSide 2 + [polyamine-binding protein]Side 1.. Its function is as follows. Part of the ABC transporter complex PotABCD involved in spermidine/putrescine import. Responsible for energy coupling to the transport system. The sequence is that of Spermidine/putrescine import ATP-binding protein PotA from Mannheimia succiniciproducens (strain KCTC 0769BP / MBEL55E).